Reading from the N-terminus, the 62-residue chain is Large ribosomal subunit protein uL29 (62 aa).

This sequence belongs to the universal ribosomal protein uL29 family.

This is Large ribosomal subunit protein uL29 from Enterococcus faecalis (strain ATCC 700802 / V583).